Consider the following 296-residue polypeptide: MGPTASGKTALALELAEKHNCEIISVDSALIYRGMDIGSAKPSVDELARGPHRLIDIRDPRESYSAADFRADAIAEIEQIVSMGKTPVLVGGTMMYFKALLEGLSPLPSADEAIRAEIQAEADEKGWEALHDQLRDIDPVSAERIHPNDPQRLSRALEVYRISGKSMTELTQTKSAPLPYDVVQFAIAPRERKVLHDLIAQRFAIMLKQGFLEEVTELKARGDLHLDLPSMRCVGYRQCWQYLDGEFDYDTMVEKAVAATRQLAKRQLTWLRSWPELNWLESGAEGNLVTLMRQCR.

2-9 (GPTASGKT) contributes to the ATP binding site. Residue 4 to 9 (TASGKT) coordinates substrate. Interaction with substrate tRNA stretches follow at residues 27 to 30 (DSAL), 151 to 155 (QRLSR), and 232 to 237 (RCVGYR).

The protein belongs to the IPP transferase family. Monomer. Mg(2+) is required as a cofactor.

It carries out the reaction adenosine(37) in tRNA + dimethylallyl diphosphate = N(6)-dimethylallyladenosine(37) in tRNA + diphosphate. In terms of biological role, catalyzes the transfer of a dimethylallyl group onto the adenine at position 37 in tRNAs that read codons beginning with uridine, leading to the formation of N6-(dimethylallyl)adenosine (i(6)A). This Shewanella baltica (strain OS155 / ATCC BAA-1091) protein is tRNA dimethylallyltransferase.